We begin with the raw amino-acid sequence, 172 residues long: MTPTQKDGPRSNQDIRVPHVQLINDEGQHQGVVSIQEALAMAAEAGLDLVEIVPNAEPPVCKIIDLGKLKYQTQKKAAETRKKQKVIEIKEIKVRPNVDVHDYGVKLKAIHRFIDHGDKVKITLRFRGREMAHQDLGLKLLQRVKEDTSEIAKIELEPKLEGRQMMMVIAPK.

It belongs to the IF-3 family. Monomer.

The protein localises to the cytoplasm. Its function is as follows. IF-3 binds to the 30S ribosomal subunit and shifts the equilibrium between 70S ribosomes and their 50S and 30S subunits in favor of the free subunits, thus enhancing the availability of 30S subunits on which protein synthesis initiation begins. The sequence is that of Translation initiation factor IF-3 from Bartonella tribocorum (strain CIP 105476 / IBS 506).